Here is a 388-residue protein sequence, read N- to C-terminus: Processive diacylglycerol beta-glucosyltransferase (388 aa).

Belongs to the glycosyltransferase 28 family. UgtP subfamily.

Its subcellular location is the cell membrane. The catalysed reaction is a 1,2-diacyl-3-O-(beta-D-glucopyranosyl)-sn-glycerol + UDP-alpha-D-glucose = a 1,2-diacyl-3-O-(beta-D-Glc-(1-&gt;6)-beta-D-Glc)-sn-glycerol + UDP + H(+). It catalyses the reaction a 1,2-diacyl-3-O-(beta-D-Glc-(1-&gt;6)-beta-D-Glc)-sn-glycerol + UDP-alpha-D-glucose = a 1,2-diacyl-3-O-(beta-D-Glc-(1-&gt;6)-beta-D-Glc-(1-&gt;6)-beta-D-Glc)-sn-glycerol + UDP + H(+). The enzyme catalyses a 1,2-diacyl-sn-glycerol + UDP-alpha-D-glucose = a 1,2-diacyl-3-O-(beta-D-glucopyranosyl)-sn-glycerol + UDP + H(+). Its pathway is glycolipid metabolism; diglucosyl-diacylglycerol biosynthesis. Its function is as follows. Processive glucosyltransferase involved in the biosynthesis of both the bilayer- and non-bilayer-forming membrane glucolipids. Is able to successively transfer up to three glucosyl residues to diacylglycerol (DAG), thereby catalyzing the formation of beta-monoglucosyl-DAG (3-O-(beta-D-glucopyranosyl)-1,2-diacyl-sn-glycerol), beta-diglucosyl-DAG (3-O-(beta-D-glucopyranosyl-beta-(1-&gt;6)-D-glucopyranosyl)-1,2-diacyl-sn-glycerol) and beta-triglucosyl-DAG (3-O-(beta-D-glucopyranosyl-beta-(1-&gt;6)-D-glucopyranosyl-beta-(1-&gt;6)-D-glucopyranosyl)-1,2-diacyl-sn-glycerol). Beta-diglucosyl-DAG is the predominant glycolipid found in Bacillales and is also used as a membrane anchor for lipoteichoic acid (LTA). In Bacillus cereus (strain 03BB102), this protein is Processive diacylglycerol beta-glucosyltransferase.